The chain runs to 406 residues: Tryptophan synthase beta chain (406 aa).

N6-(pyridoxal phosphate)lysine is present on Lys99.

It belongs to the TrpB family. As to quaternary structure, tetramer of two alpha and two beta chains. Pyridoxal 5'-phosphate serves as cofactor.

The enzyme catalyses (1S,2R)-1-C-(indol-3-yl)glycerol 3-phosphate + L-serine = D-glyceraldehyde 3-phosphate + L-tryptophan + H2O. The protein operates within amino-acid biosynthesis; L-tryptophan biosynthesis; L-tryptophan from chorismate: step 5/5. In terms of biological role, the beta subunit is responsible for the synthesis of L-tryptophan from indole and L-serine. This is Tryptophan synthase beta chain from Rhizobium meliloti (strain 1021) (Ensifer meliloti).